The following is a 302-amino-acid chain: Methionyl-tRNA formyltransferase (302 aa).

108 to 111 (SLLP) is a (6S)-5,6,7,8-tetrahydrofolate binding site. Basic and acidic residues predominate over residues 279 to 288 (KRPMEPEEFL). Residues 279–302 (KRPMEPEEFLRGFPLPEGSRAHTS) form a disordered region.

Belongs to the Fmt family.

It carries out the reaction L-methionyl-tRNA(fMet) + (6R)-10-formyltetrahydrofolate = N-formyl-L-methionyl-tRNA(fMet) + (6S)-5,6,7,8-tetrahydrofolate + H(+). Functionally, attaches a formyl group to the free amino group of methionyl-tRNA(fMet). The formyl group appears to play a dual role in the initiator identity of N-formylmethionyl-tRNA by promoting its recognition by IF2 and preventing the misappropriation of this tRNA by the elongation apparatus. The polypeptide is Methionyl-tRNA formyltransferase (Cereibacter sphaeroides (strain ATCC 17023 / DSM 158 / JCM 6121 / CCUG 31486 / LMG 2827 / NBRC 12203 / NCIMB 8253 / ATH 2.4.1.) (Rhodobacter sphaeroides)).